Here is a 1492-residue protein sequence, read N- to C-terminus: Collagen alpha-1(II) chain (1492 aa).

The signal sequence occupies residues 1–26 (MFSFVDSRTLVLFAATQVILLAVVRC). Positions 27-186 (QDEEDVLATG…PPGLGGNFAA (160 aa)) are cleaved as a propeptide — N-terminal propeptide. The region spanning 36-94 (GSCVQHGQRYSDKDVWKPEPCQICVCDTGNVLCDEIICEDPKDCPNAEIPFGECCPICP) is the VWFC domain. Positions 98–1255 (SSTSSGQGVL…ADQASSSVPQ (1158 aa)) are disordered. Basic and acidic residues-rich tracts occupy residues 110 to 121 (QKGEPGDIKDVV) and 138 to 159 (PRGDRGDKGEKGAPGPRGRDGE). Residues 163 to 178 (PGNPGPVGPPGPPGPP) are compositionally biased toward pro residues. The segment covering 197–208 (GGAQMGVMQGPM) has biased composition (low complexity). The interval 206 to 1219 (GPMGPMGPRG…PGPPGPPGPP (1014 aa)) is triple-helical region. Over residues 213–222 (PRGPPGPTGA) the composition is skewed to pro residues. Over residues 223-234 (PGPQGFQGNPGE) the composition is skewed to low complexity. Over residues 236–245 (GEPGAGGPMG) the composition is skewed to gly residues. A compositionally biased stretch (basic and acidic residues) spans 256–270 (PGDDGEAGKPGKSGE). Positions 311–320 (GAKGEGGATG) are enriched in gly residues. Composition is skewed to low complexity over residues 321–333 (EAGSPGPMGPRGL), 340–355 (PGASGAAGARGNDGLP), 366–376 (PAGAPGFPGAP), and 396–436 (PRGE…AGAP). Pro residues predominate over residues 438-447 (FPGPRGPPGP). 2 stretches are compositionally biased toward low complexity: residues 480–490 (SAGPQGAPGPA) and 501–517 (EPGAAGPLGPPGERGAP). Over residues 539-548 (GVPGLGGPKG) the composition is skewed to gly residues. 2 stretches are compositionally biased toward low complexity: residues 627–636 (LLGAPGLRGL) and 645–655 (AQGPNGPAGPA). 2 positions are modified to 4-hydroxyproline: P664 and P673. P675 carries the 3-hydroxyproline modification. A 4-hydroxyproline mark is found at P676 and P679. The segment covering 711–741 (ERGSSGPQGLQGPRGLPGTPGTDGPKGATGP) has biased composition (low complexity). The segment covering 769 to 780 (KGDRGDTGEKGP) has biased composition (basic and acidic residues). Composition is skewed to low complexity over residues 838-850 (AGFAGPPGADGQA) and 894-910 (AQGPPGATGFPGAAGRV). P912 carries the 3-hydroxyproline modification. Residues P913, P919, and P925 each carry the 4-hydroxyproline modification. The span at 919–930 (PGPSGAPGSAGK) shows a compositional bias: low complexity. The segment covering 1010 to 1019 (GKQGGPGSAG) has biased composition (gly residues). Residues 1105-1114 (SGPAGARGLP) are compositionally biased toward low complexity. Basic and acidic residues predominate over residues 1120–1134 (RGDKGEAGEAGERGQ). Low complexity-rich tracts occupy residues 1140–1159 (FTGLQGLPGPPGTAGDQGAS) and 1176–1186 (PSGKDGSNGLP). Position 1149 is a 3-hydroxyproline (P1149). P1186 bears the 4-hydroxyproline mark. P1191 carries the post-translational modification 3-hydroxyproline. P1192 bears the 4-hydroxyproline mark. A compositionally biased stretch (pro residues) spans 1204–1221 (AGPPGQPGPPGPPGPPGP). P1206 carries the 3-hydroxyproline modification. A 4-hydroxyproline mark is found at P1207 and P1210. P1212 bears the 3-hydroxyproline mark. Residues P1213 and P1216 each carry the 4-hydroxyproline modification. P1218 is modified (3-hydroxyproline). 4-hydroxyproline is present on P1219. The nonhelical region (C-terminal) stretch occupies residues 1220–1246 (GPGIDMSAFAGLSQPEKGPDPMRYMRA). Basic and acidic residues predominate over residues 1236–1245 (KGPDPMRYMR). Residues 1247-1492 (DQASSSVPQR…GVDIGPVCFL (246 aa)) constitute a propeptide, C-terminal propeptide. The Fibrillar collagen NC1 domain maps to 1258–1492 (VDVEATLKSL…GVDIGPVCFL (235 aa)). 3 cysteine pairs are disulfide-bonded: C1288–C1320, C1328–C1490, and C1398–C1443. The Ca(2+) site is built by D1306, N1308, Q1309, C1311, and D1314. N-linked (GlcNAc...) asparagine glycosylation is present at N1393.

Belongs to the fibrillar collagen family. Homotrimers of alpha 1(II) chains. Contains mostly 4-hydroxyproline. Prolines at the third position of the tripeptide repeating unit (G-X-P) are 4-hydroxylated in some or all of the chains. In terms of processing, contains 3-hydroxyproline at a few sites. This modification occurs on the first proline residue in the sequence motif Gly-Pro-Hyp, where Hyp is 4-hydroxyproline. Post-translationally, lysine residues at the third position of the tripeptide repeating unit (G-X-Y) are 5-hydroxylated in some or all of the chains. O-glycosylated on hydroxylated lysine residues. The O-linked glycan consists of a Glc-Gal disaccharide.

The protein resides in the secreted. The protein localises to the extracellular space. It localises to the extracellular matrix. Type II collagen is specific for cartilaginous tissues. It is essential for the normal embryonic development of the skeleton, for linear growth and for the ability of cartilage to resist compressive forces. The sequence is that of Collagen alpha-1(II) chain from Xenopus tropicalis (Western clawed frog).